A 304-amino-acid chain; its full sequence is UDP-N-acetylenolpyruvoylglucosamine reductase (304 aa).

The FAD-binding PCMH-type domain occupies 33-212 (MGGLADLFLI…KEMMDDLTHK (180 aa)). The active site involves R176. S226 acts as the Proton donor in catalysis. E296 is a catalytic residue.

Belongs to the MurB family. The cofactor is FAD.

It localises to the cytoplasm. It catalyses the reaction UDP-N-acetyl-alpha-D-muramate + NADP(+) = UDP-N-acetyl-3-O-(1-carboxyvinyl)-alpha-D-glucosamine + NADPH + H(+). The protein operates within cell wall biogenesis; peptidoglycan biosynthesis. Cell wall formation. The chain is UDP-N-acetylenolpyruvoylglucosamine reductase from Exiguobacterium sibiricum (strain DSM 17290 / CCUG 55495 / CIP 109462 / JCM 13490 / 255-15).